Consider the following 72-residue polypeptide: Large ribosomal subunit protein uL29 (72 aa).

The protein belongs to the universal ribosomal protein uL29 family.

The protein is Large ribosomal subunit protein uL29 of Prochlorococcus marinus subsp. pastoris (strain CCMP1986 / NIES-2087 / MED4).